Reading from the N-terminus, the 287-residue chain is Ribosomal RNA small subunit methyltransferase A (287 aa).

Asn28, Leu30, Gly55, Glu77, Asp103, and Asn123 together coordinate S-adenosyl-L-methionine.

It belongs to the class I-like SAM-binding methyltransferase superfamily. rRNA adenine N(6)-methyltransferase family. RsmA subfamily.

The protein resides in the cytoplasm. It catalyses the reaction adenosine(1518)/adenosine(1519) in 16S rRNA + 4 S-adenosyl-L-methionine = N(6)-dimethyladenosine(1518)/N(6)-dimethyladenosine(1519) in 16S rRNA + 4 S-adenosyl-L-homocysteine + 4 H(+). In terms of biological role, specifically dimethylates two adjacent adenosines (A1518 and A1519) in the loop of a conserved hairpin near the 3'-end of 16S rRNA in the 30S particle. May play a critical role in biogenesis of 30S subunits. The chain is Ribosomal RNA small subunit methyltransferase A from Rhodopseudomonas palustris (strain BisB5).